We begin with the raw amino-acid sequence, 435 residues long: F-box/FBD/LRR-repeat protein At5g44980 (435 aa).

Residues 3–49 (RDYISELPDSLLTQILLELRTKDSVKTSVLSKRWRNLWLNVPGLELF) form the F-box domain. LRR repeat units lie at residues 88-114 (CKGYRDRLMELIGTLVDHGLQHLYVFM), 138-162 (LHNVELKNSDFVVSLPCLKILKLEN), 165-190 (HGEDGPLVVEKLISGCSVLEDLELIR), 191-217 (PFDIRTHKVLLLLRVSSQTLKSFTLHF), 250-275 (VKNLSSLFSIDIGTKFNPLRHEDLRM), and 324-349 (MWSSSTHLLEAFLESCPNLKNLILEY). The FBD domain occupies 355 to 405 (REQVDFTNVPQCLISTLEYVEIKEPNEKSTIKLVNYFLENSAVLKKLTLRF).

This chain is F-box/FBD/LRR-repeat protein At5g44980, found in Arabidopsis thaliana (Mouse-ear cress).